Consider the following 788-residue polypeptide: Spastin (788 aa).

Residues 1–105 are disordered; it reads MVRTKNQSSS…PRSAGGPSSV (105 aa). Residues 1-116 lie on the Cytoplasmic side of the membrane; the sequence is MVRTKNQSSS…KQNLYVVSFP (116 aa). The segment at 1–227 is required for localization to punctate cytoplasmic foci; the sequence is MVRTKNQSSS…NRSGSGYSPG (227 aa). Low complexity-rich tracts occupy residues 8 to 48 and 57 to 75; these read SSSS…SSHR and ATNVSSSSNRRTTPGSSPD. Positions 117-137 form an intramembrane region, helical; it reads IIFLFNVLRSLIYQLFCIFRY. Over 138–788 the chain is Cytoplasmic; that stretch reads LYGASTKVIY…WSSDYGDITI (651 aa). Residues 227 to 788 are sufficient for interaction with microtubules and microtubule severing; that stretch reads GPGDPLLAKQ…WSSDYGDITI (562 aa). The region spanning 240-315 is the MIT domain; that stretch reads HRRAFEYISK…SMARDRLHFL (76 aa). Basic and acidic residues predominate over residues 330–353; that stretch reads KEEQKPNPSREQHQKPQKAREAAD. Residues 330–484 form a disordered region; sequence KEEQKPNPSR…SGSGSGASTP (155 aa). Low complexity predominate over residues 380-400; it reads LTTPRISATATTPTSSSSLAS. Composition is skewed to polar residues over residues 419 to 433 and 453 to 469; these read NKSQTLPRNLGSKTS and QFSSGRNTPPQRSRTPI. The interval 471–485 is required for interaction with microtubules; sequence NNGASGSGSGASTPV. 553 to 560 provides a ligand contact to ATP; it reads GPPGNGKT.

The protein belongs to the AAA ATPase family. Spastin subfamily. In terms of assembly, homohexamer. The homohexamer is stabilized by ATP-binding. The homohexamer may adopt a ring conformation through which microtubules pass prior to being severed. Interacts with microtubules. Interacts with atl; may be involved in microtubule dynamics.

It is found in the membrane. The protein localises to the cytoplasm. The protein resides in the cytoskeleton. It localises to the microtubule organizing center. Its subcellular location is the centrosome. It is found in the chromosome. The protein localises to the lipid droplet. The catalysed reaction is n ATP + n H2O + a microtubule = n ADP + n phosphate + (n+1) alpha/beta tubulin heterodimers.. In terms of biological role, ATP-dependent microtubule severing protein. Stimulates microtubule minus-end depolymerization and poleward microtubule flux in the mitotic spindle. Regulates microtubule stability in the neuromuscular junction synapse. Involved in lipid metabolism by regulating the size and distribution of lipid droplets. Involved in axon regeneration by regulating microtubule severing. The protein is Spastin of Drosophila pseudoobscura pseudoobscura (Fruit fly).